The primary structure comprises 347 residues: Histidinol-phosphate aminotransferase (347 aa).

Residue lysine 209 is modified to N6-(pyridoxal phosphate)lysine.

The protein belongs to the class-II pyridoxal-phosphate-dependent aminotransferase family. Histidinol-phosphate aminotransferase subfamily. In terms of assembly, homodimer. Pyridoxal 5'-phosphate is required as a cofactor.

It carries out the reaction L-histidinol phosphate + 2-oxoglutarate = 3-(imidazol-4-yl)-2-oxopropyl phosphate + L-glutamate. The protein operates within amino-acid biosynthesis; L-histidine biosynthesis; L-histidine from 5-phospho-alpha-D-ribose 1-diphosphate: step 7/9. This is Histidinol-phosphate aminotransferase from Geotalea daltonii (strain DSM 22248 / JCM 15807 / FRC-32) (Geobacter daltonii).